A 545-amino-acid polypeptide reads, in one-letter code: Probable acyl-activating enzyme 4 (545 aa).

Belongs to the ATP-dependent AMP-binding enzyme family. As to expression, expressed in roots, leaves, stems, flowers and developing seeds.

May act as an acid--thiol ligase that activates carboxylic acids by forming acyl-CoAs. This Arabidopsis thaliana (Mouse-ear cress) protein is Probable acyl-activating enzyme 4 (AEE4).